A 305-amino-acid chain; its full sequence is MSEVTRSLLQRWGASLRRGADFDSWGQLVEAIDEYQILARHLQKEAQAQHNNSEFTEEQKKTIGKIATCLELRSAALQSTQSQEEFKLEDLKKLEPILKNILTYNKEFPFDVQPIPLRRILAPGEEENLEFEEDEEGGAGAGPPDSFSARVPGTLLPRLPSEPGMTLLTIRIEKIGLKDAGQCIDPYITVSVKDLNGIDLTPVQDTPVASRKEDTYVHFNVDIELQKHVERLTKGAAIFFEFKHYKPKKRFTSTKCFAFMEMDEIKPGPIVIELYKKPTDFKRKKLQLLTKKPLYLHLHQSLHKE.

A coiled-coil region spans residues 27–62 (QLVEAIDEYQILARHLQKEAQAQHNNSEFTEEQKKT). The span at 128–137 (NLEFEEDEEG) shows a compositional bias: acidic residues. The segment at 128 to 150 (NLEFEEDEEGGAGAGPPDSFSAR) is disordered. Residues 153–220 (GTLLPRLPSE…RKEDTYVHFN (68 aa)) are axin-binding. One can recognise a C2 Aida-type domain in the interval 156 to 303 (LPRLPSEPGM…LYLHLHQSLH (148 aa)).

It belongs to the AIDA family. Interacts with AXIN1.

Acts as a ventralizing factor during embryogenesis. Inhibits axin-mediated JNK activation by binding axin and disrupting axin homodimerization. This in turn antagonizes a Wnt/beta-catenin-independent dorsalization pathway activated by AXIN/JNK-signaling. This Mus musculus (Mouse) protein is Axin interactor, dorsalization-associated protein (Aida).